The following is a 240-amino-acid chain: Protein OPG176 (240 aa).

Belongs to the orthopoxvirus OPG176 family. In terms of assembly, tetramer. Interacts with host MYD88, TRF4, TICAM2 and MAL.

Functionally, BCL2-like protein which disrupts the host immune response by inhibiting the TLR4 signaling pathway leading to NF-kappa-B activation. Acts close to the plasma membrane and targets several host TIR-domain containing adapter proteins including MYD88, TIRAP, TRIF and TICAM2. In turn, blocks the host NF-kappa-B and TRIF-mediated IRF3 activation. The polypeptide is Protein OPG176 (OPG176) (Cynomys gunnisoni (Gunnison's prairie dog)).